Reading from the N-terminus, the 189-residue chain is MALPFVLLMALVVLNCKSICSLGCDLPQTHSLSNRRTLMIMAQMGRISPFSCLKDRHDFGFPQEEFDGNQFQKAQAISVLHEMIQQTFNLFSTKDSSATWDETLLDKFYTELYQQLNDLEACMMQEVGVEDTPLMNVDSILTVRKYFQRITLYLTEKKYSPCAWEVVRAEIMRSFSLSANLQERLRRKE.

The first 21 residues, Met1–Ser21, serve as a signal peptide directing secretion. Intrachain disulfides connect Cys24-Cys122 and Cys52-Cys162.

Belongs to the alpha/beta interferon family.

The protein resides in the secreted. Produced by macrophages, IFN-alpha have antiviral activities. Interferon stimulates the production of two enzymes: a protein kinase and an oligoadenylate synthetase. The protein is Interferon alpha-5 (IFNA5) of Homo sapiens (Human).